The chain runs to 435 residues: Probable glycine dehydrogenase (decarboxylating) subunit 1 (435 aa).

This sequence belongs to the GcvP family. N-terminal subunit subfamily. As to quaternary structure, the glycine cleavage system is composed of four proteins: P, T, L and H. In this organism, the P 'protein' is a heterodimer of two subunits.

It carries out the reaction N(6)-[(R)-lipoyl]-L-lysyl-[glycine-cleavage complex H protein] + glycine + H(+) = N(6)-[(R)-S(8)-aminomethyldihydrolipoyl]-L-lysyl-[glycine-cleavage complex H protein] + CO2. In terms of biological role, the glycine cleavage system catalyzes the degradation of glycine. The P protein binds the alpha-amino group of glycine through its pyridoxal phosphate cofactor; CO(2) is released and the remaining methylamine moiety is then transferred to the lipoamide cofactor of the H protein. The chain is Probable glycine dehydrogenase (decarboxylating) subunit 1 from Coprothermobacter proteolyticus (strain ATCC 35245 / DSM 5265 / OCM 4 / BT).